Reading from the N-terminus, the 346-residue chain is Probable RNA methyltransferase PSPA7_3453 (346 aa).

The active-site Proton acceptor is the Glu-91. Residues 94–320 (LLPRGGLCVS…TKVRNSAGQD (227 aa)) form the Radical SAM core domain. A disulfide bridge connects residues Cys-101 and Cys-325. The [4Fe-4S] cluster site is built by Cys-108, Cys-112, and Cys-115. Residues 153-154 (GE), Ser-183, 206-208 (SLH), and Asn-282 each bind S-adenosyl-L-methionine. Cys-325 acts as the S-methylcysteine intermediate in catalysis.

The protein belongs to the radical SAM superfamily. RlmN family. Requires [4Fe-4S] cluster as cofactor.

Its subcellular location is the cytoplasm. This chain is Probable RNA methyltransferase PSPA7_3453, found in Pseudomonas paraeruginosa (strain DSM 24068 / PA7) (Pseudomonas aeruginosa (strain PA7)).